The primary structure comprises 334 residues: Holliday junction branch migration complex subunit RuvB (334 aa).

The segment at 4–184 (ADRIISPNAT…FGIVQRLEFY (181 aa)) is large ATPase domain (RuvB-L). ATP is bound by residues Ile-23, Arg-24, Gly-65, Lys-68, Thr-69, Thr-70, 131 to 133 (EDY), Arg-174, Tyr-184, and Arg-221. Thr-69 provides a ligand contact to Mg(2+). Residues 185–255 (SVEDLRHIVA…VADKALNMLN (71 aa)) are small ATPAse domain (RuvB-S). A head domain (RuvB-H) region spans residues 258 to 334 (LHGFDHMDRR…YNHFGLTMPE (77 aa)). The DNA site is built by Arg-313 and Arg-318.

This sequence belongs to the RuvB family. As to quaternary structure, homohexamer. Forms an RuvA(8)-RuvB(12)-Holliday junction (HJ) complex. HJ DNA is sandwiched between 2 RuvA tetramers; dsDNA enters through RuvA and exits via RuvB. An RuvB hexamer assembles on each DNA strand where it exits the tetramer. Each RuvB hexamer is contacted by two RuvA subunits (via domain III) on 2 adjacent RuvB subunits; this complex drives branch migration. In the full resolvosome a probable DNA-RuvA(4)-RuvB(12)-RuvC(2) complex forms which resolves the HJ.

It is found in the cytoplasm. It carries out the reaction ATP + H2O = ADP + phosphate + H(+). Functionally, the RuvA-RuvB-RuvC complex processes Holliday junction (HJ) DNA during genetic recombination and DNA repair, while the RuvA-RuvB complex plays an important role in the rescue of blocked DNA replication forks via replication fork reversal (RFR). RuvA specifically binds to HJ cruciform DNA, conferring on it an open structure. The RuvB hexamer acts as an ATP-dependent pump, pulling dsDNA into and through the RuvAB complex. RuvB forms 2 homohexamers on either side of HJ DNA bound by 1 or 2 RuvA tetramers; 4 subunits per hexamer contact DNA at a time. Coordinated motions by a converter formed by DNA-disengaged RuvB subunits stimulates ATP hydrolysis and nucleotide exchange. Immobilization of the converter enables RuvB to convert the ATP-contained energy into a lever motion, pulling 2 nucleotides of DNA out of the RuvA tetramer per ATP hydrolyzed, thus driving DNA branch migration. The RuvB motors rotate together with the DNA substrate, which together with the progressing nucleotide cycle form the mechanistic basis for DNA recombination by continuous HJ branch migration. Branch migration allows RuvC to scan DNA until it finds its consensus sequence, where it cleaves and resolves cruciform DNA. In Hahella chejuensis (strain KCTC 2396), this protein is Holliday junction branch migration complex subunit RuvB.